The sequence spans 263 residues: HTH-type transcriptional repressor NanR (263 aa).

The interval 1–22 is disordered; the sequence is MGLMNAFDSQTEDSSPAIGRNL. Positions 30–98 constitute an HTH gntR-type domain; sequence KKLSEMVEEE…NGERARVSRP (69 aa). A DNA-binding region (H-T-H motif) is located at residues 58–77; that stretch reads ERELMAFFNVGRPSVREALA.

This sequence belongs to the NanR family.

Functionally, transcriptional repressor that controls expression of the genes required for the catabolism of sialic acids. The polypeptide is HTH-type transcriptional repressor NanR (Shigella dysenteriae serotype 1 (strain Sd197)).